The primary structure comprises 823 residues: Ankyrin repeat domain-containing protein 20B (823 aa).

ANK repeat units lie at residues 32–65 (SELQKIHRAAVKGDAAEVERCLARRSGDLDARDK), 66–95 (QHRTALHLACASGHVQVVTLLVNRKCQIDI), 99–128 (ENRTPLIQAVHCQEEACAVILLKHGANPNL), 132–161 (YGNTALHYAVYSESTSLAEKLLSHGAHIEA), 165–194 (DSNTPLLFAIICKKEKMVEFLLKKKASTHA), and 198–227 (LRRSALMLAVYYDSPGIVSILLKQNIDVFA). 2 disordered regions span residues 302 to 343 (PEKV…GVED) and 355 to 401 (VQTL…QLSE). The span at 372-382 (QERHERSEKKQ) shows a compositional bias: basic and acidic residues. 3 coiled-coil regions span residues 431 to 480 (KKLK…KQLE), 565 to 724 (EMIT…NNST), and 776 to 805 (LVLEEKSKKLMNECDHLKESLFQYEREKAE).

This Homo sapiens (Human) protein is Ankyrin repeat domain-containing protein 20B (ANKRD20A8P).